The chain runs to 440 residues: Glycerophosphocholine cholinephosphodiesterase ENPP6 (440 aa).

The first 22 residues, 1–22, serve as a signal peptide directing secretion; it reads MAVKLGTLLLALALGLAQPASA. Substrate contacts are provided by Asp32, Ser71, and Asn92. The Zn(2+) site is built by Asp32 and Ser71. Ser71 (nucleophile) is an active-site residue. A Phosphoserine modification is found at Ser71. Residues Asn100 and Asn118 are each glycosylated (N-linked (GlcNAc...) asparagine). A disulfide bond links Cys142 and Cys154. Substrate is bound at residue Asp193. Residues Asp193, His197, Asp240, and His241 each contribute to the Zn(2+) site. Residue His241 coordinates substrate. N-linked (GlcNAc...) asparagine glycosylation occurs at Asn341. A substrate-binding site is contributed by His354. Residue His354 participates in Zn(2+) binding. A glycan (N-linked (GlcNAc...) asparagine) is linked at Asn404. A lipid anchor (GPI-anchor amidated serine) is attached at Ser419. Residues 420 to 440 constitute a propeptide, removed in mature form; it reads TAPPVWPSHCALALILLFLLA.

It belongs to the nucleotide pyrophosphatase/phosphodiesterase family. In terms of assembly, homodimer; disulfide-linked. Homotetramer. The cofactor is Zn(2+). Predominantly expressed in kidney and brain. In the kidney, expressed specifically in the proximal tubules and thin descending limbs of Henle (at protein level).

It is found in the cell membrane. It catalyses the reaction sn-glycerol 3-phosphocholine + H2O = phosphocholine + glycerol + H(+). The enzyme catalyses a 1-acyl-sn-glycero-3-phosphocholine + H2O = a 1-acyl-sn-glycerol + phosphocholine + H(+). The catalysed reaction is a 1-O-alkyl-sn-glycero-3-phosphocholine + H2O = a 1-O-alkyl-sn-glycerol + phosphocholine + H(+). It carries out the reaction 1-dodecanoyl-sn-glycero-3-phosphocholine + H2O = 1-dodecanoyl-sn-glycerol + phosphocholine + H(+). It catalyses the reaction 1-hexadecanoyl-sn-glycero-3-phosphocholine + H2O = 1-hexadecanoyl-sn-glycerol + phosphocholine + H(+). The enzyme catalyses 1-(5Z,8Z,11Z,14Z-eicosatetraenoyl)-sn-glycero-3-phosphocholine + H2O = 1-(5Z,8Z,11Z,14Z-eicosatetraenoyl)-sn-glycerol + phosphocholine + H(+). The catalysed reaction is 1-tetradecanoyl-sn-glycero-3-phosphocholine + H2O = 1-tetradecanoyl-sn-glycerol + phosphocholine + H(+). It carries out the reaction sphing-4-enine-phosphocholine + H2O = sphing-4-enine + phosphocholine + H(+). It catalyses the reaction 1-(9Z-octadecenoyl)-sn-glycero-3-phosphocholine + H2O = 1-(9Z-octadecenoyl)-sn-glycerol + phosphocholine + H(+). The enzyme catalyses 1-(9Z,12Z)-octadecadienoyl-sn-glycero-3-phosphocholine + H2O = 1-(9Z,12Z-octadecadienoyl)-sn-glycerol + phosphocholine + H(+). The catalysed reaction is glycero-2-phosphocholine + H2O = phosphocholine + glycerol + H(+). Its activity is regulated as follows. Inhibited by EDTA and EGTA in vitro. Its function is as follows. Choline-specific glycerophosphodiesterase that hydrolyzes glycerophosphocholine (GPC) and lysophosphatidylcholine (LPC) and contributes to supplying choline to the cells. Has a preference for LPC with short (12:0 and 14:0) or polyunsaturated (18:2 and 20:4) fatty acids. In vitro, hydrolyzes only choline-containing lysophospholipids, such as sphingosylphosphorylcholine (SPC), platelet-activating factor (PAF) and lysoPAF, but not other lysophospholipids. The protein is Glycerophosphocholine cholinephosphodiesterase ENPP6 of Homo sapiens (Human).